The chain runs to 443 residues: Proline--tRNA ligase (443 aa).

It belongs to the class-II aminoacyl-tRNA synthetase family. ProS type 2 subfamily. Homodimer.

The protein resides in the cytoplasm. The enzyme catalyses tRNA(Pro) + L-proline + ATP = L-prolyl-tRNA(Pro) + AMP + diphosphate. Catalyzes the attachment of proline to tRNA(Pro) in a two-step reaction: proline is first activated by ATP to form Pro-AMP and then transferred to the acceptor end of tRNA(Pro). This chain is Proline--tRNA ligase, found in Caulobacter vibrioides (strain ATCC 19089 / CIP 103742 / CB 15) (Caulobacter crescentus).